Here is a 382-residue protein sequence, read N- to C-terminus: Tuliposide A-converting enzyme 2, chloroplastic (382 aa).

The N-terminal 74 residues, 1–74 (MSVASFFSSL…PSPSLSPTPT (74 aa)), are a transit peptide targeting the chloroplast. S232 (acyl-ester intermediate) is an active-site residue. Active-site charge relay system residues include D324 and H356.

The protein belongs to the AB hydrolase superfamily. As to quaternary structure, homodimer. As to expression, expressed in roots, stems, leaves, petals, stamens and pistils, but not in bulb scales.

The protein resides in the plastid. The protein localises to the chloroplast. The catalysed reaction is 6-tuliposide A = tulipalin A + D-glucose. Its activity is regulated as follows. Inhibited by NaF, AgNO(3), HgCl(2), CuSO(4) and phenylmethylsulfonyl fluoride (PMSF). In terms of biological role, lactone-forming carboxylesterases, specifically catalyzing intramolecular transesterification, but not hydrolysis. Involved in the biosynthesis of tulipalins, defensive chemicals that show antimicrobial activities against a broad range of strains of bacteria and fungi. Substrates are 6-tuliposide A &gt; 6-tuliposide B. The sequence is that of Tuliposide A-converting enzyme 2, chloroplastic (TCEA2) from Tulipa gesneriana (Garden tulip).